Here is a 177-residue protein sequence, read N- to C-terminus: Outer envelope pore protein 21, chloroplastic (177 aa).

The Cytoplasmic segment spans residues 1–21; it reads METSLRYGGDSKALKIHAKEK. A beta stranded transmembrane segment spans residues 22-31; the sequence is LRIDTNTFFQ. Topologically, residues 32–55 are chloroplast intermembrane; sequence VRGGLDTKTGQPSSGSALIRHFYP. Residues 56–65 traverse the membrane as a beta stranded segment; that stretch reads NFSATLGVGV. Residues 66–81 are Cytoplasmic-facing; sequence RYDKQDSVGVRYAKND. A beta stranded membrane pass occupies residues 82–91; it reads KLRYTVLAKK. Over 92–97 the chain is Chloroplast intermembrane; the sequence is TFPVTN. The chain crosses the membrane as a beta stranded span at residues 98 to 107; sequence DGLVNFKIKG. The Cytoplasmic portion of the chain corresponds to 108–120; that stretch reads GCDVDQDFKEWKS. The chain crosses the membrane as a beta stranded span at residues 121 to 130; the sequence is RGGAEFSWNV. The Chloroplast intermembrane portion of the chain corresponds to 131-137; the sequence is FNFQKDQ. The chain crosses the membrane as a beta stranded span at residues 138-147; sequence DVRLRIGYEA. At 148–152 the chain is on the cytoplasmic side; that stretch reads FEQVP. Residues 153-162 form a beta stranded membrane-spanning segment; that stretch reads YLQIRENNWT. Over 163-168 the chain is Chloroplast intermembrane; the sequence is FNADYK. The chain crosses the membrane as a beta stranded span at residues 169-177; it reads GRWNVRYDL.

It belongs to the plastid outer envelope porin OEP21 (TC 1.B.29) family. As to expression, present in roots, shoots and leaves.

The protein resides in the plastid. The protein localises to the etioplast membrane. It localises to the chloroplast outer membrane. Its function is as follows. Voltage-dependent rectifying anion channel that facilitates the translocation between chloroplast and cytoplasm of phosphorylated carbohydrates such as triosephosphate, 3-phosphoglycerate and inorganic phosphate (Pi) depending of ATP to triosephosphate ratio in the plastidial intermembrane space; in high triosephosphate/ATP conditions (e.g. photosynthesis), export of triosphosphate from chloroplast (outward rectifying channels), but in high ATP/triosephosphate conditions (e.g. dark phase), import of phosphosolutes (inward rectifying channels). The polypeptide is Outer envelope pore protein 21, chloroplastic (OEP21) (Pisum sativum (Garden pea)).